A 465-amino-acid polypeptide reads, in one-letter code: Antithrombin-III (465 aa).

An N-terminal signal peptide occupies residues 1 to 32 (MISNGIGTVTAGKRSICLLPLLLIGLWGCVTC). Cystine bridges form between Cys-41–Cys-161 and Cys-54–Cys-128. A Phosphothreonine modification is found at Thr-64. At Ser-69 the chain carries Phosphoserine. Trp-82 lines the heparin pocket. N-linked (GlcNAc...) asparagine glycosylation is present at Asn-129. Position 162 (Arg-162) interacts with heparin. A glycan (N-linked (GlcNAc...) asparagine) is linked at Asn-168. Arg-178 contacts heparin. Asn-188 and Asn-225 each carry an N-linked (GlcNAc...) asparagine glycan. Cys-280 and Cys-463 form a disulfide bridge.

The protein belongs to the serpin family. In terms of assembly, forms protease inhibiting heterodimer with TMPRSS7. Phosphorylated by FAM20C in the extracellular medium. As to expression, plasma.

The protein resides in the secreted. It localises to the extracellular space. Most important serine protease inhibitor in plasma that regulates the blood coagulation cascade. AT-III inhibits thrombin, matriptase-3/TMPRSS7, as well as factors IXa, Xa and XIa. Its inhibitory activity is greatly enhanced in the presence of heparin. The protein is Antithrombin-III (SERPINC1) of Bos taurus (Bovine).